A 352-amino-acid chain; its full sequence is Large ribosomal subunit protein uL10 (352 aa).

The span at 286–297 shows a compositional bias: acidic residues; that stretch reads DDEDALPEELQD. The tract at residues 286–352 is disordered; the sequence is DDEDALPEEL…GAEGLGEMFG (67 aa). The segment covering 299 to 310 has biased composition (low complexity); sequence DAPAAPAGGEAD. The span at 324–340 shows a compositional bias: acidic residues; the sequence is EADDADDSDDDDDDDDG. Residues 343–352 show a composition bias toward gly residues; that stretch reads GAEGLGEMFG.

The protein belongs to the universal ribosomal protein uL10 family. In terms of assembly, part of the 50S ribosomal subunit. Forms part of the ribosomal stalk which helps the ribosome interact with GTP-bound translation factors. Forms a heptameric L10(L12)2(L12)2(L12)2 complex, where L10 forms an elongated spine to which the L12 dimers bind in a sequential fashion.

Its function is as follows. Forms part of the ribosomal stalk, playing a central role in the interaction of the ribosome with GTP-bound translation factors. This is Large ribosomal subunit protein uL10 from Halobacterium salinarum (strain ATCC 700922 / JCM 11081 / NRC-1) (Halobacterium halobium).